The primary structure comprises 143 residues: Heat shock protein 16 (143 aa).

Residues Gln-30–Lys-143 enclose the sHSP domain.

This sequence belongs to the small heat shock protein (HSP20) family.

Its subcellular location is the cytoplasm. It is found in the nucleus. The sequence is that of Heat shock protein 16 (hsp16) from Schizosaccharomyces pombe (strain 972 / ATCC 24843) (Fission yeast).